Here is a 245-residue protein sequence, read N- to C-terminus: Dehydrogenase/reductase SDR family member 6 (245 aa).

NAD(+)-binding positions include 16-18 (QGI), Asp37, and Asp58. Arg144 provides a ligand contact to substrate. The active-site Proton acceptor is the Tyr147. Residues Lys151 and 180-184 (VDTPS) each bind NAD(+). Arg188 and Arg205 together coordinate substrate.

The protein belongs to the short-chain dehydrogenases/reductases (SDR) family. In terms of assembly, homotetramer.

The protein resides in the cytoplasm. It catalyses the reaction cis-4-hydroxy-L-proline + NAD(+) = 4-oxo-L-proline + NADH + H(+). The enzyme catalyses (R)-3-hydroxybutanoate + NAD(+) = acetoacetate + NADH + H(+). Its pathway is amino-acid metabolism. It functions in the pathway siderophore biosynthesis. NAD(H)-dependent dehydrogenase/reductase with a preference for cyclic substrates. Catalyzes stereoselective conversion of 4-oxo-L-proline to cis-4-hydroxy-L-proline, likely a detoxification mechanism for ketoprolines. Mediates the formation of 2,5-dihydroxybenzoate (2,5-DHBA), a siderophore that chelates free cytoplasmic iron and associates with LCN2, thereby regulating iron transport and homeostasis while protecting cells against free radical-induced oxidative stress. The iron-siderophore complex is imported into mitochondria, providing an iron source for mitochondrial metabolic processes in particular heme synthesis. May act as a 3-hydroxybutyrate dehydrogenase. The sequence is that of Dehydrogenase/reductase SDR family member 6 (BDH2) from Bos taurus (Bovine).